A 375-amino-acid polypeptide reads, in one-letter code: Growth/differentiation factor 8 (375 aa).

An N-terminal signal peptide occupies residues Met-1 to Ala-18. Residues Gly-19–Arg-266 constitute a propeptide that is removed on maturation. Residues Asn-47 and Asn-71 are each glycosylated (N-linked (GlcNAc...) asparagine). Disulfide bonds link Cys-272-Cys-282, Cys-281-Cys-340, Cys-309-Cys-372, and Cys-313-Cys-374.

The protein belongs to the TGF-beta family. In terms of assembly, homodimer; disulfide-linked. Interacts with WFIKKN2, leading to inhibit its activity. Interacts with FSTL3. Synthesized as large precursor molecule that undergoes proteolytic cleavage to generate an N-terminal propeptide and a disulfide linked C-terminal dimer, which is the biologically active molecule. The circulating form consists of a latent complex of the C-terminal dimer and other proteins, including its propeptide, which maintain the C-terminal dimer in a latent, inactive state. Ligand activation requires additional cleavage of the prodomain by a tolloid-like metalloproteinase.

The protein localises to the secreted. Acts specifically as a negative regulator of skeletal muscle growth. This is Growth/differentiation factor 8 (MSTN) from Taurotragus derbianus (Giant eland).